Here is a 294-residue protein sequence, read N- to C-terminus: Homeobox-leucine zipper protein ATHB-13 (294 aa).

The segment at residues M82–Q141 is a DNA-binding region (homeobox). The leucine-zipper stretch occupies residues L142–L177. Residues E181–T246 are disordered. Over residues S197–D210 the composition is skewed to low complexity. Polar residues predominate over residues A214 to T223.

Belongs to the HD-ZIP homeobox family. Class I subfamily. Predominantly expressed in leaves and flowers.

The protein resides in the nucleus. Functionally, probable transcription factor that may act in the sucrose-signaling pathway. This is Homeobox-leucine zipper protein ATHB-13 (ATHB-13) from Arabidopsis thaliana (Mouse-ear cress).